We begin with the raw amino-acid sequence, 205 residues long: Urease accessory protein UreG (205 aa).

Residue 11 to 18 (GPVGSGKT) participates in GTP binding.

This sequence belongs to the SIMIBI class G3E GTPase family. UreG subfamily. As to quaternary structure, homodimer. UreD, UreF and UreG form a complex that acts as a GTP-hydrolysis-dependent molecular chaperone, activating the urease apoprotein by helping to assemble the nickel containing metallocenter of UreC. The UreE protein probably delivers the nickel.

Its subcellular location is the cytoplasm. Functionally, facilitates the functional incorporation of the urease nickel metallocenter. This process requires GTP hydrolysis, probably effectuated by UreG. This chain is Urease accessory protein UreG, found in Prochlorococcus marinus (strain NATL2A).